Reading from the N-terminus, the 278-residue chain is Energy-coupling factor transporter ATP-binding protein EcfA1 (278 aa).

The 235-residue stretch at 5–239 folds into the ABC transporter domain; sequence IRVQHLNYTY…GMELLRLGLD (235 aa). 39–46 is a binding site for ATP; that stretch reads GHNGSGKS. Glu-165 (proton acceptor) is an active-site residue.

It belongs to the ABC transporter superfamily. Energy-coupling factor EcfA family. In terms of assembly, forms a stable energy-coupling factor (ECF) transporter complex probably composed of 2 membrane-embedded substrate-binding proteins (S component), 2 ATP-binding proteins (A component) and 2 transmembrane proteins (T component). This complex interacts with a number of substrate-specific components, including FolT and ThiT for 5-formyltetrahydrofolate and thiamine respectively.

The protein localises to the cell membrane. Its function is as follows. ATP-binding (A) component of a common energy-coupling factor (ECF) ABC-transporter complex. Unlike classic ABC transporters this ECF transporter provides the energy necessary to transport a number of different substrates including 5-formyltetrahydrofolate and thiamine. Expression of the complex plus FolT or ThiT in Lactococcus lactis subsp. cremoris (strain NZ9000) allows 5-formyltetrahydrofolate or thiamine uptake respectively; 5-formyltetrahydrofolate or thiamine are not taken up in the absence of FolT/ThiT or the EcfA1A2T complex. Deenergized L.lactis subsp. cremoris (treated with 2-deoxyglucose) does not take up substrate. The sequence is that of Energy-coupling factor transporter ATP-binding protein EcfA1 from Lacticaseibacillus paracasei (strain ATCC 334 / BCRC 17002 / CCUG 31169 / CIP 107868 / KCTC 3260 / NRRL B-441) (Lactobacillus paracasei).